The chain runs to 198 residues: Ras-related protein RabH (198 aa).

Position 14–21 (G14–S21) interacts with GTP. The short motif at T36–F44 is the Effector region element. Residues D62 to M66 and S120 to D123 each bind GTP. At C195 the chain carries Cysteine methyl ester. C195 carries the S-geranylgeranyl cysteine lipid modification. The propeptide at S196–N198 is removed in mature form.

Belongs to the small GTPase superfamily. Rab family.

It localises to the cell membrane. The protein is Ras-related protein RabH (rabH) of Dictyostelium discoideum (Social amoeba).